We begin with the raw amino-acid sequence, 640 residues long: F-box only protein 43 (640 aa).

At T176 the chain carries Phosphothreonine. S275 carries the phosphoserine modification. A disordered region spans residues 328-354; that stretch reads LQEQGQSEDEMQTVHPNSDSGVLESLQ. The F-box domain maps to 423-480; that stretch reads MGIEQLDILTELQYRNLKHILAMVLESLTSESLYSAWNVSRNWREIVAQDKKANRRRK. A ZBR-type zinc finger spans residues 568-616; sequence ALKPCPRCQSPAKYQPHKKRGLCSRLACGFDFCVLCLCAYHGSEDCRRG. Positions 572, 575, 590, 595, 600, 603, 608, and 613 each coordinate Zn(2+). The segment at 615–640 is disordered; it reads RGSAKARGSKDVLPGSAQSKRNLKRL.

As to quaternary structure, part of a SCF (SKP1-cullin-F-box) protein ligase complex. Interaction with SKP1 does not occur. Interacts with ANAPC2; the interaction is direct, ANAPC4, CDC16, CDC23; the interaction is direct, ANAPC10; the interaction is direct and CDC26, during spermatogenesis. Interacts with CDC20. Phosphorylated on Thr-176 and Ser-275 in response to calcium, which is a prerequisite for ubiquitination and proteasomal degradation. Post-translationally, ubiquitinated in response to calcium, which promotes proteasomal degradation. Present in testis and ovary (at protein level). Expression is high in immature oocytes, and diminishes after oocyte activation. Expressed post-meiotically in spermatids and sperm.

It participates in protein modification; protein ubiquitination. Functionally, required to establish and maintain the arrest of oocytes at the second meiotic metaphase until fertilization. Acts by inhibiting the anaphase-promoting complex/cyclosome (APC/C) ubiquitin ligase. Probably recognizes and binds to some phosphorylated proteins and promotes their ubiquitination and degradation. Plays a vital role in modulating the ubiquitilation of CCNB1 and CDK1 during gametogenesis. This chain is F-box only protein 43 (Fbxo43), found in Mus musculus (Mouse).